Reading from the N-terminus, the 329-residue chain is Transaldolase (329 aa).

The active-site Schiff-base intermediate with substrate is K136.

The protein belongs to the transaldolase family. Type 1 subfamily. Homodimer.

It is found in the cytoplasm. The enzyme catalyses D-sedoheptulose 7-phosphate + D-glyceraldehyde 3-phosphate = D-erythrose 4-phosphate + beta-D-fructose 6-phosphate. It participates in carbohydrate degradation; pentose phosphate pathway; D-glyceraldehyde 3-phosphate and beta-D-fructose 6-phosphate from D-ribose 5-phosphate and D-xylulose 5-phosphate (non-oxidative stage): step 2/3. Its function is as follows. Transaldolase is important for the balance of metabolites in the pentose-phosphate pathway. The polypeptide is Transaldolase (Methylococcus capsulatus (strain ATCC 33009 / NCIMB 11132 / Bath)).